The chain runs to 232 residues: Protein shisa-3 (232 aa).

The signal sequence occupies residues 1-19 (MRLLGCFFLIFLTWGSARA). Over 20–93 (QGEYCHGWLD…GVSAQPVYVP (74 aa)) the chain is Lumenal. The chain crosses the membrane as a helical span at residues 94–114 (FLIVGSIFIAFIIVGSLVAVY). Residues 115-232 (CCTCLRPKQT…NKSCPDFRQS (118 aa)) are Cytoplasmic-facing. The disordered stretch occupies residues 146–185 (TSGNLRTPSRQSSTATSSTSTGGSVRRLSSSRADPGYLVS). The segment covering 151–177 (RTPSRQSSTATSSTSTGGSVRRLSSSR) has biased composition (low complexity).

This sequence belongs to the shisa family. As to quaternary structure, interacts with fzd8 and fgfr1.

Its subcellular location is the endoplasmic reticulum membrane. In terms of biological role, plays an essential role in the maturation of presomitic mesoderm cells by individual attenuation of both fgf and wnt signaling. Regulates head and somite developmen. Inhibits both wnt and fgf signaling through the regulation of protein maturation and cell surface transportation of their receptors within the endoplasmic reticulum. The chain is Protein shisa-3 (shisa3) from Xenopus laevis (African clawed frog).